A 238-amino-acid polypeptide reads, in one-letter code: 1-(5-phosphoribosyl)-5-[(5-phosphoribosylamino)methylideneamino] imidazole-4-carboxamide isomerase (238 aa).

The Proton acceptor role is filled by Asp8. Asp127 serves as the catalytic Proton donor.

Belongs to the HisA/HisF family.

The protein localises to the cytoplasm. The enzyme catalyses 1-(5-phospho-beta-D-ribosyl)-5-[(5-phospho-beta-D-ribosylamino)methylideneamino]imidazole-4-carboxamide = 5-[(5-phospho-1-deoxy-D-ribulos-1-ylimino)methylamino]-1-(5-phospho-beta-D-ribosyl)imidazole-4-carboxamide. It functions in the pathway amino-acid biosynthesis; L-histidine biosynthesis; L-histidine from 5-phospho-alpha-D-ribose 1-diphosphate: step 4/9. The protein is 1-(5-phosphoribosyl)-5-[(5-phosphoribosylamino)methylideneamino] imidazole-4-carboxamide isomerase of Nitratiruptor sp. (strain SB155-2).